Here is a 59-residue protein sequence, read N- to C-terminus: Large ribosomal subunit protein bL32 (59 aa).

Residues 1-59 (MAVQQNKKSPSKRGMHRSHDFLTTAPIAVEPTTGEVHLRHHVSPNGYYRGRKVVKTKND) are disordered. Residues 49–59 (RGRKVVKTKND) show a composition bias toward basic residues.

The protein belongs to the bacterial ribosomal protein bL32 family.

In Ralstonia pickettii (strain 12J), this protein is Large ribosomal subunit protein bL32.